The primary structure comprises 156 residues: 6,7-dimethyl-8-ribityllumazine synthase (156 aa).

Residues Phe-23, 57 to 59, and 81 to 83 each bind 5-amino-6-(D-ribitylamino)uracil; these read AYE and AII. 86 to 87 serves as a coordination point for (2S)-2-hydroxy-3-oxobutyl phosphate; it reads GT. Catalysis depends on His-89, which acts as the Proton donor. Residue Phe-114 participates in 5-amino-6-(D-ribitylamino)uracil binding. Residue Arg-128 participates in (2S)-2-hydroxy-3-oxobutyl phosphate binding.

Belongs to the DMRL synthase family.

It catalyses the reaction (2S)-2-hydroxy-3-oxobutyl phosphate + 5-amino-6-(D-ribitylamino)uracil = 6,7-dimethyl-8-(1-D-ribityl)lumazine + phosphate + 2 H2O + H(+). The protein operates within cofactor biosynthesis; riboflavin biosynthesis; riboflavin from 2-hydroxy-3-oxobutyl phosphate and 5-amino-6-(D-ribitylamino)uracil: step 1/2. Catalyzes the formation of 6,7-dimethyl-8-ribityllumazine by condensation of 5-amino-6-(D-ribitylamino)uracil with 3,4-dihydroxy-2-butanone 4-phosphate. This is the penultimate step in the biosynthesis of riboflavin. In Helicobacter pylori (strain P12), this protein is 6,7-dimethyl-8-ribityllumazine synthase.